A 104-amino-acid chain; its full sequence is Large ribosomal subunit protein uL24 (104 aa).

It belongs to the universal ribosomal protein uL24 family. As to quaternary structure, part of the 50S ribosomal subunit.

One of two assembly initiator proteins, it binds directly to the 5'-end of the 23S rRNA, where it nucleates assembly of the 50S subunit. In terms of biological role, one of the proteins that surrounds the polypeptide exit tunnel on the outside of the subunit. This chain is Large ribosomal subunit protein uL24, found in Sodalis glossinidius (strain morsitans).